A 307-amino-acid polypeptide reads, in one-letter code: Glutaminase 1 (307 aa).

7 residues coordinate substrate: serine 62, asparagine 114, glutamate 159, asparagine 166, tyrosine 190, tyrosine 242, and valine 260.

It belongs to the glutaminase family. In terms of assembly, homotetramer.

The enzyme catalyses L-glutamine + H2O = L-glutamate + NH4(+). This chain is Glutaminase 1, found in Clostridium perfringens (strain 13 / Type A).